The primary structure comprises 231 residues: Lipoprotein-releasing system ATP-binding protein LolD (231 aa).

Residues 9–230 (FSLKDVGKEY…LRAGELYDQN (222 aa)) enclose the ABC transporter domain. Residue 45-52 (GASGSGKS) participates in ATP binding.

It belongs to the ABC transporter superfamily. Lipoprotein translocase (TC 3.A.1.125) family. In terms of assembly, the complex is composed of two ATP-binding proteins (LolD) and two transmembrane proteins (LolC and LolE).

It localises to the cell inner membrane. Its function is as follows. Part of the ABC transporter complex LolCDE involved in the translocation of mature outer membrane-directed lipoproteins, from the inner membrane to the periplasmic chaperone, LolA. Responsible for the formation of the LolA-lipoprotein complex in an ATP-dependent manner. The chain is Lipoprotein-releasing system ATP-binding protein LolD from Oleidesulfovibrio alaskensis (strain ATCC BAA-1058 / DSM 17464 / G20) (Desulfovibrio alaskensis).